The primary structure comprises 465 residues: Type II restriction enzyme BsuMI component YdjA (465 aa).

BsuMI restriction activity requires YdiR, YdiS and YdjA.

The enzyme catalyses Endonucleolytic cleavage of DNA to give specific double-stranded fragments with terminal 5'-phosphates.. In terms of biological role, a P subtype restriction enzyme that recognizes the double-stranded sequence 5'-CTCGAG-3'; the cleavage site is unknown. This chain is Type II restriction enzyme BsuMI component YdjA (ydjA), found in Bacillus subtilis (strain 168).